The primary structure comprises 312 residues: Methionyl-tRNA formyltransferase (312 aa).

A (6S)-5,6,7,8-tetrahydrofolate-binding site is contributed by 111–114; sequence SLLP.

Belongs to the Fmt family.

The enzyme catalyses L-methionyl-tRNA(fMet) + (6R)-10-formyltetrahydrofolate = N-formyl-L-methionyl-tRNA(fMet) + (6S)-5,6,7,8-tetrahydrofolate + H(+). In terms of biological role, attaches a formyl group to the free amino group of methionyl-tRNA(fMet). The formyl group appears to play a dual role in the initiator identity of N-formylmethionyl-tRNA by promoting its recognition by IF2 and preventing the misappropriation of this tRNA by the elongation apparatus. The protein is Methionyl-tRNA formyltransferase of Myxococcus xanthus (strain DK1622).